We begin with the raw amino-acid sequence, 623 residues long: V-type proton ATPase catalytic subunit A (623 aa).

ATP is bound at residue glycine 252–threonine 259.

This sequence belongs to the ATPase alpha/beta chains family. As to quaternary structure, V-ATPase is a heteromultimeric enzyme composed of a peripheral catalytic V1 complex (components A to H) attached to an integral membrane V0 proton pore complex (components: a, c, c'', d and e). Binds to the deubiquitinating enzyme AMSH3.

It localises to the vacuole membrane. It carries out the reaction ATP + H2O + 4 H(+)(in) = ADP + phosphate + 5 H(+)(out). In terms of biological role, catalytic subunit of the peripheral V1 complex of vacuolar ATPase. V-ATPase vacuolar ATPase is responsible for acidifying a variety of intracellular compartments in eukaryotic cells. This is V-type proton ATPase catalytic subunit A (VHA-A) from Arabidopsis thaliana (Mouse-ear cress).